Reading from the N-terminus, the 228-residue chain is ATP-dependent dethiobiotin synthetase BioD 1 (228 aa).

13 to 18 (EVGKTV) contributes to the ATP binding site. Residue threonine 17 coordinates Mg(2+). Lysine 38 is a catalytic residue. Residue serine 42 coordinates substrate. Residues aspartate 55, 116–119 (EGAG), 176–177 (ND), and 205–207 (PWL) each bind ATP. Mg(2+)-binding residues include aspartate 55 and glutamate 116.

This sequence belongs to the dethiobiotin synthetase family. As to quaternary structure, homodimer. Mg(2+) is required as a cofactor.

It localises to the cytoplasm. It catalyses the reaction (7R,8S)-7,8-diammoniononanoate + CO2 + ATP = (4R,5S)-dethiobiotin + ADP + phosphate + 3 H(+). It participates in cofactor biosynthesis; biotin biosynthesis; biotin from 7,8-diaminononanoate: step 1/2. Catalyzes a mechanistically unusual reaction, the ATP-dependent insertion of CO2 between the N7 and N8 nitrogen atoms of 7,8-diaminopelargonic acid (DAPA, also called 7,8-diammoniononanoate) to form a ureido ring. This Salmonella typhi protein is ATP-dependent dethiobiotin synthetase BioD 1.